The following is a 612-amino-acid chain: Dihydroxy-acid dehydratase (612 aa).

Asp-81 serves as a coordination point for Mg(2+). Position 122 (Cys-122) interacts with [2Fe-2S] cluster. 2 residues coordinate Mg(2+): Asp-123 and Lys-124. The residue at position 124 (Lys-124) is an N6-carboxylysine. Cys-195 contributes to the [2Fe-2S] cluster binding site. Glu-491 lines the Mg(2+) pocket. Catalysis depends on Ser-517, which acts as the Proton acceptor.

Belongs to the IlvD/Edd family. As to quaternary structure, homodimer. It depends on [2Fe-2S] cluster as a cofactor. Mg(2+) is required as a cofactor.

The enzyme catalyses (2R)-2,3-dihydroxy-3-methylbutanoate = 3-methyl-2-oxobutanoate + H2O. It carries out the reaction (2R,3R)-2,3-dihydroxy-3-methylpentanoate = (S)-3-methyl-2-oxopentanoate + H2O. It functions in the pathway amino-acid biosynthesis; L-isoleucine biosynthesis; L-isoleucine from 2-oxobutanoate: step 3/4. It participates in amino-acid biosynthesis; L-valine biosynthesis; L-valine from pyruvate: step 3/4. Its function is as follows. Functions in the biosynthesis of branched-chain amino acids. Catalyzes the dehydration of (2R,3R)-2,3-dihydroxy-3-methylpentanoate (2,3-dihydroxy-3-methylvalerate) into 2-oxo-3-methylpentanoate (2-oxo-3-methylvalerate) and of (2R)-2,3-dihydroxy-3-methylbutanoate (2,3-dihydroxyisovalerate) into 2-oxo-3-methylbutanoate (2-oxoisovalerate), the penultimate precursor to L-isoleucine and L-valine, respectively. This chain is Dihydroxy-acid dehydratase, found in Haemophilus influenzae (strain PittEE).